Reading from the N-terminus, the 577-residue chain is Protein downstream neighbor of son homolog (577 aa).

Disordered stretches follow at residues 1–67 (MAEL…KRRN) and 328–382 (FTQP…LEEM). The span at 362-375 (ETDEVSDESDEDES) shows a compositional bias: acidic residues.

The protein belongs to the DONSON family. In terms of assembly, component of the replisome complex.

The protein localises to the nucleus. Functionally, replisome component that maintains genome stability by protecting stalled or damaged replication forks. After the induction of replication stress, required for the stabilization of stalled replication forks, the efficient activation of the intra-S-phase and G/2M cell-cycle checkpoints and the maintenance of genome stability. The sequence is that of Protein downstream neighbor of son homolog from Xenopus tropicalis (Western clawed frog).